We begin with the raw amino-acid sequence, 156 residues long: MKLHILAVGHKMPDWIATGFDEYAKRMPPELRIELREIKPEQRSSGRPAESVMAAERIRIEAALPKNARIVALDERGKDWTTMQLAGALPSWQQDGRDVAFLIGGADGLDPDLKARADMLLRVSSLTLPHAMVRVLLAEQLYRAWTITQNHPYHRV.

Residues leucine 73, glycine 104, and 123 to 128 contribute to the S-adenosyl-L-methionine site; that span reads VSSLTL.

This sequence belongs to the RNA methyltransferase RlmH family. In terms of assembly, homodimer.

The protein localises to the cytoplasm. It carries out the reaction pseudouridine(1915) in 23S rRNA + S-adenosyl-L-methionine = N(3)-methylpseudouridine(1915) in 23S rRNA + S-adenosyl-L-homocysteine + H(+). Functionally, specifically methylates the pseudouridine at position 1915 (m3Psi1915) in 23S rRNA. This chain is Ribosomal RNA large subunit methyltransferase H, found in Paraburkholderia xenovorans (strain LB400).